A 79-amino-acid chain; its full sequence is uncharacterized protein (79 aa).

This is an uncharacterized protein from Sulfolobus spindle-shape virus 1 (SSV1).